The chain runs to 70 residues: MLNPSIDSLLTKIDSKYTLVTVAAKRAREMQIADNCVIEKPVSYKCVGKALEEIDLEVLKYVPSDDTIID.

It belongs to the RNA polymerase subunit omega family. In terms of assembly, the RNAP catalytic core consists of 2 alpha, 1 beta, 1 beta' and 1 omega subunit. When a sigma factor is associated with the core the holoenzyme is formed, which can initiate transcription.

The enzyme catalyses RNA(n) + a ribonucleoside 5'-triphosphate = RNA(n+1) + diphosphate. Its function is as follows. Promotes RNA polymerase assembly. Latches the N- and C-terminal regions of the beta' subunit thereby facilitating its interaction with the beta and alpha subunits. This chain is DNA-directed RNA polymerase subunit omega, found in Bacillus mycoides (strain KBAB4) (Bacillus weihenstephanensis).